The sequence spans 88 residues: Small ribosomal subunit protein uS15c (88 aa).

The protein belongs to the universal ribosomal protein uS15 family. Part of the 30S ribosomal subunit.

Its subcellular location is the plastid. The protein localises to the chloroplast. In Aethionema grandiflorum (Persian stone-cress), this protein is Small ribosomal subunit protein uS15c (rps15).